The following is a 114-amino-acid chain: RHSDPARRGELSVCDSISEWVTAANKKTAVDMSGATVTVLEKVPVSKGQLKQYFYETKCNPMGYMKEGCRGIEKRYWNSQCRTTQSYVRAFTMDSKKKVGWRFIRIDTSCVCTL.

3 disulfide bridges follow: C14–C81, C59–C110, and C69–C112.

The protein belongs to the NGF-beta family.

The protein localises to the secreted. Promotes the survival of neuronal populations that are all located either in the central nervous system or directly connected to it. The polypeptide is Neurotrophic factor BDNF precursor form (bdnf) (Xenopus laevis (African clawed frog)).